The sequence spans 333 residues: Cytosolic Fe-S cluster assembly factor NBP35 (333 aa).

The [4Fe-4S] cluster site is built by Cys-32, Cys-46, Cys-49, and Cys-55. Position 85 to 92 (85 to 92 (GKGGVGKS)) interacts with ATP. The [4Fe-4S] cluster site is built by Cys-258 and Cys-261.

The protein belongs to the Mrp/NBP35 ATP-binding proteins family. NUBP1/NBP35 subfamily. In terms of assembly, heterotetramer of 2 NBP35 and 2 CFD1 chains. The cofactor is [4Fe-4S] cluster.

It is found in the cytoplasm. It localises to the nucleus. Functionally, component of the cytosolic iron-sulfur (Fe/S) protein assembly (CIA) machinery. Required for maturation of extramitochondrial Fe-S proteins. The NBP35-CFD1 heterotetramer forms a Fe-S scaffold complex, mediating the de novo assembly of an Fe-S cluster and its transfer to target apoproteins. Required for biogenesis and export of both ribosomal subunits, which may reflect a role in assembly of the Fe/S clusters in RLI1, a protein which performs rRNA processing and ribosome export. The polypeptide is Cytosolic Fe-S cluster assembly factor NBP35 (Eremothecium gossypii (strain ATCC 10895 / CBS 109.51 / FGSC 9923 / NRRL Y-1056) (Yeast)).